The following is a 1555-amino-acid chain: MPLLHRKPFVRQKPPGDLRPDEEVFYCKVTNEIFRHYDDFFERTILCNSLVWSCAVTGRPGLTYQEALESERKARQNLQSFPEPLIIPVLYLTNLTRRSRLHEICDDIFAYVKDRYFVEETVEVIRNNGTRLQCRILEVLPPLHQNGFANGHLSSADGETIVISDSDDSETQSSSFHHGKKKDAIDPLLFRYRVQPTKKEMYESAVVKATQISRRKHLFSRDKLKLFLKQHCEAQDGVIKIKASSFSAYNIAEQDFSYFFPDDPPTFIFSPANRRRGRPPKRISFGQEDSIASKQTAARYRNKAIKERDKLLKQEEMRALAFEKAKLKRERADALEARKREKEDKEKKREELKKMVEEERLKKKEEKERLKIEREKEREKLREEKRKYMEYLKQWSKPREDMECDDLKELPEPTPVKTRLPPEVFGDALMVLEFLNAFGELFDLQDEFPEGVTLAEVLEEALVGNDSEGPLCELLFFFLTAIFQAMAEEEEEVAKEQITDADTKDLTEALDEDADPTKSALSAVAALAAAWPQLHQGCSLKSLDLDSCTLSEILRLHILASGADVTSANAKYRYQKRGGFDATDDACMELRLSNPSLVKKLSSTSVYDLTPGEKMKILHALCGKLLTLVSTRDFIEDYVDVLRQAKQEFRELKAEQHRKEREATAARIRRRKEEKLKEQEQKMKEKQEKLKEDEQRNSAAVPGYGEEEREDFDTSTENKNIEQKDLDPDVVTEDEDDPGSHKRSRRGKVGQTAVKQCIKQEEMNYCIKQEPLSADAEEALRQEQQQKEKELLDKIQSAIACTNIFPLGRDRLYRRYWIFPSIPGLFIEEDYSGLTEDMLLPRPSSFHNNAQPRDPQVSIKTEESFLSESTSSLDQGPFDDSVLLPKPVHKPNRWCFYSSCAQLDQLIDALNSRGHRESALKETLLQEKSRICAQLAHFSEEKFHFSDKPQADSKPVSSRGRSSGACDISQMSAERQLELRLRDFLLDIEDRIYQGTLGAIKVTDRQVWRSALENGRYELLSEESKENGVIKTVNEDVEEMEMEQARVIVRDRLLGIKTETPSTISTSASTPQSVSNVVHYLALALFQIEQGIERRFLKAPLDGNDSGRSYKTVLDRWRESLLSSASLSQVFLHLSTLDRSVMWSKSILNARCKICRKKGDAENMVLCDGCDRGHHTYCVRPKLKAVPDGDWFCPECRPKQRSRRLSSRQRPSLESDEEMEEGMEDDDDEVDDDDEEGQSEEEEYEVEQDEEDSDDDEALSPPKRGRPQVRLPIKTKGRFGPSFPSRSQRQDPGRYPSRSQQSTPKNTAKSASKNLRKTRSAPPTETRSLRVGSRSTRHSPSALQDVFVELLSPHSKRRGRKGADHTPEHSPSFTNFRVSTSRSSRQLIPLNTAESLSLQHSESKRRGRKRQSTESSPVPLNRRSSGRQGGVHELSAFEQLVVELVRHDDSWPFLKLVSKIQVPDYYDIIKKPIALNIIREKVNKCEYKLASEFIDDIELMFSNCFEYNPRNTSEAKAGTRLQAFFHIQAQKLGLHVSPSTVDQVSTPLAAKKSRI.

The tract at residues 1 to 128 (MPLLHRKPFV…EETVEVIRNN (128 aa)) is required for association with the CHRAC1/POLE3 complex. Positions 1–128 (MPLLHRKPFV…EETVEVIRNN (128 aa)) are required for interaction with the CHRAC1-POLE3 heterodimer. Required for interaction with the CHRAC1-POLE3 heterodimer. The segment at 1-133 (MPLLHRKPFV…VIRNNGTRLQ (133 aa)) is required for interaction with NCOR1. Residues 22 to 128 (EEVFYCKVTN…EETVEVIRNN (107 aa)) form the WAC domain. Serine 270 and serine 284 each carry phosphoserine. Residues 422–488 (PEVFGDALMV…LTAIFQAMAE (67 aa)) enclose the DDT domain. Positions 635-701 (IEDYVDVLRQ…EDEQRNSAAV (67 aa)) form a coiled coil. Composition is skewed to basic and acidic residues over residues 652 to 664 (LKAE…REAT) and 671 to 696 (RKEE…DEQR). Positions 652–751 (LKAEQHRKER…KRSRRGKVGQ (100 aa)) are disordered. Positions 668–935 (IRRRKEEKLK…QEKSRICAQL (268 aa)) are interaction with SMARCA5. The tract at residues 668–935 (IRRRKEEKLK…QEKSRICAQL (268 aa)) is required for interaction with SMARCA5 and formation of the CHRAC ISWI chromatin remodeling complex. 2 stretches are compositionally biased toward acidic residues: residues 705–714 (GEEEREDFDT) and 728–737 (PDVVTEDEDD). Threonine 732 carries the post-translational modification Phosphothreonine. The stretch at 773-798 (SADAEEALRQEQQQKEKELLDKIQSA) forms a coiled coil. 2 disordered regions span residues 843 to 874 (PSSF…SSLD) and 944 to 969 (HFSD…CDIS). Positions 864–873 (SFLSESTSSL) are enriched in low complexity. Lysine 954 is covalently cross-linked (Glycyl lysine isopeptide (Lys-Gly) (interchain with G-Cter in SUMO2)). 2 positions are modified to phosphoserine: serine 962 and serine 963. The segment at 1149–1199 (NARCKICRKKGDAENMVLCDGCDRGHHTYCVRPKLKAVPDGDWFCPECRPK) adopts a PHD-type zinc-finger fold. Residues 1203–1429 (RRLSSRQRPS…LNRRSSGRQG (227 aa)) are disordered. Residues 1214 to 1258 (ESDEEMEEGMEDDDDEVDDDDEEGQSEEEEYEVEQDEEDSDDDEA) show a composition bias toward acidic residues. Over residues 1263-1277 (KRGRPQVRLPIKTKG) the composition is skewed to basic residues. Position 1282 is a phosphoserine (serine 1282). A compositionally biased stretch (polar residues) spans 1297–1313 (SRSQQSTPKNTAKSASK). Phosphoserine occurs at positions 1320, 1339, 1352, 1370, 1401, 1412, and 1416. Over residues 1369–1386 (HSPSFTNFRVSTSRSSRQ) the composition is skewed to polar residues. In terms of domain architecture, Bromo spans 1429–1532 (GGVHELSAFE…AFFHIQAQKL (104 aa)). Residue threonine 1546 is modified to Phosphothreonine.

Belongs to the WAL family. Component of the ACF-1 ISWI chromatin remodeling complex at least composed of SMARCA1 and BAZ1A, which regulates the spacing of histone octamers on the DNA template to facilitate access to DNA. Within the ACF-1 ISWI chromatin remodeling complex interacts with SMARCA1; the interaction is direct. Component of the ACF-5 ISWI chromatin remodeling complex (also called the ACF complex) at least composed of BAZ1A and SMARCA5/SNF2H, which regulates the spacing of histone octamers on the DNA template to facilitate access to DNA. Within the ACF-5 ISWI chromatin remodeling complex interacts with SMARCA5/SNF2H; the interaction is direct. Component of the CHRAC ISWI chromatin remodeling complex at least composed of SMARCA5/SNF2H, BAZ1A/ACF1, CHRAC1 and POLE3; the complex preferentially binds DNA through the CHRAC1-POLE3 heterodimer and possesses ATP-dependent nucleosome-remodeling activity. Within the complex interacts (via N-terminus) with POLE3-CHRAC1 heterodimer; the interaction is direct and is required for the complex to preferentially bind to DNA. Within the complex interacts with SMARCA5/SNF2H; the interaction is direct and promotes the interaction with the POLE3-CHRAC1 heterodimer. Interacts with NCOR1 (via its RD1 domain); the interaction corepresses a number of NCOR1-regulated genes.

It is found in the nucleus. In terms of biological role, regulatory subunit of the ATP-dependent ACF-1 and ACF-5 ISWI chromatin remodeling complexes, which form ordered nucleosome arrays on chromatin and slide edge- and center-positioned histone octamers away from their original location on the DNA template to facilitate access to DNA during DNA-templated processes such as DNA replication, transcription, and repair. Both complexes regulate the spacing of nucleosomes along the chromatin and have the ability to slide mononucleosomes to the center of a DNA template in an ATP-dependent manner. The ACF-1 ISWI chromatin remodeling complex has a lower ATP hydrolysis rate than the ACF-5 ISWI chromatin remodeling complex. Has a role in sensing the length of DNA which flank nucleosomes, which modulates the nucleosome spacing activity of the ACF-5 ISWI chromatin remodeling complex. Involved in DNA replication and together with SMARCA5/SNF2H is required for replication of pericentric heterochromatin in S-phase. May have a role in nuclear receptor-mediated transcription repression. The polypeptide is Bromodomain adjacent to zinc finger domain protein 1A (Baz1a) (Mus musculus (Mouse)).